The chain runs to 568 residues: Nucleolar protein 58 (568 aa).

The region spanning isoleucine 293–histidine 417 is the Nop domain. Residues alanine 430–glutamate 568 form a disordered region. Residues glutamate 471–aspartate 482 are compositionally biased toward basic and acidic residues. A compositionally biased stretch (basic residues) spans arginine 522–lysine 533. Residues lysine 534–lysine 544 are compositionally biased toward basic and acidic residues.

This sequence belongs to the NOP5/NOP56 family.

The protein resides in the nucleus. It localises to the nucleolus. Required for pre-18S rRNA processing. May bind microtubules. In Cryptococcus neoformans var. neoformans serotype D (strain JEC21 / ATCC MYA-565) (Filobasidiella neoformans), this protein is Nucleolar protein 58 (NOP58).